A 1213-amino-acid polypeptide reads, in one-letter code: Protein jagged-1b (1213 aa).

Positions 1-26 (MILRRSSVFSAFYLHAFLLCLRTTVS) are cleaved as a signal peptide. At 27-1064 (DASGHFELEI…HQIPSPKTDY (1038 aa)) the chain is on the extracellular side. N-linked (GlcNAc...) asparagine glycosylation occurs at Asn-139. Residues 182 to 226 (VTCLEHYYGFGCNKFCRPRDEFFGHYTCDQNGNKTCLEGWTGPDC) enclose the DSL domain. Intrachain disulfides connect Cys-184-Cys-193 and Cys-197-Cys-209. N-linked (GlcNAc...) asparagine glycosylation occurs at Asn-214. Intrachain disulfides connect Cys-217-Cys-226, Cys-231-Cys-242, Cys-235-Cys-248, Cys-250-Cys-259, Cys-262-Cys-273, Cys-268-Cys-279, Cys-281-Cys-290, Cys-297-Cys-309, Cys-303-Cys-319, Cys-321-Cys-330, Cys-337-Cys-348, Cys-342-Cys-357, Cys-359-Cys-368, Cys-375-Cys-386, Cys-380-Cys-395, Cys-397-Cys-406, Cys-413-Cys-424, Cys-418-Cys-433, Cys-435-Cys-444, Cys-451-Cys-461, Cys-455-Cys-470, Cys-472-Cys-481, Cys-488-Cys-499, Cys-493-Cys-508, Cys-510-Cys-519, Cys-526-Cys-537, Cys-531-Cys-546, Cys-548-Cys-557, Cys-596-Cys-612, Cys-614-Cys-623, Cys-630-Cys-641, Cys-635-Cys-650, Cys-652-Cys-661, Cys-668-Cys-679, Cys-673-Cys-688, Cys-690-Cys-699, Cys-706-Cys-717, Cys-711-Cys-726, and Cys-728-Cys-737. Residues 227–260 (NTAICRQGCSTEHGSCKQPGGCKCLYGWQGPYCD) form the EGF-like 1 domain. The region spanning 261–291 (KCIPHPGCVHGTCVEPWQCLCDTNWGGQLCD) is the EGF-like 2; atypical domain. 2 EGF-like domains span residues 293 to 331 (DLNYCGTHQPCLNGGTCSNTGPDKYQCSCEDGYSGVNCE) and 333 to 369 (AEHACLSNPCANGGTCKETSQGYECHCAIGWSGTSCE). The EGF-like 5; calcium-binding domain occupies 371-407 (NVDDCTPNQCKHGGTCQDLVNGFKCACPPHWTGKTCQ). The 37-residue stretch at 409 to 445 (DANECEDKPCVNAKSCHNLIGAYFCECLPGWSGQNCD) folds into the EGF-like 6; calcium-binding domain. Residues 447-482 (NINDCKGQCLNGGTCKDLVNGYRCLCPPGYTGEQCE) enclose the EGF-like 7; calcium-binding domain. The EGF-like 8; calcium-binding domain occupies 484 to 520 (DVDECASSPCLNGGRCQDEVNGFQCLCPAGFSGQLCQ). EGF-like domains lie at 522–558 (DIDYCKPNPCQNGAQCFNLASDYFCKCPDDYEGKNCS) and 592–624 (SSNVCGPHGRCRSQAGGQFTCECQEGFRGTYCH). The N-linked (GlcNAc...) asparagine glycan is linked to Asn-556. The region spanning 626–662 (NINDCESNPCRNGGTCIDKVNVYQCICADGWEGVHCE) is the EGF-like 11; calcium-binding domain. Residues 664-700 (NIDDCSLNPCLNKGACQDLVNDFYCECRNGWKGKTCH) enclose the EGF-like 12; calcium-binding domain. Residues 702–738 (RDSQCDEATCNNGGTCHDEGDTFKCRCSPGWEGATCN) form the EGF-like 13 domain. A glycan (N-linked (GlcNAc...) asparagine) is linked at Asn-742. 9 disulfide bridges follow: Cys-745–Cys-756, Cys-750–Cys-765, Cys-767–Cys-776, Cys-783–Cys-794, Cys-788–Cys-803, Cys-805–Cys-814, Cys-821–Cys-832, Cys-826–Cys-841, and Cys-843–Cys-852. Positions 746–777 (LPNPCENGGTCVVNGDSFNCVCKEGWEGSTCT) constitute an EGF-like 14 domain. An EGF-like 15; calcium-binding domain is found at 779 to 815 (NTNDCNPHPCYNSGTCVDGENWYRCECAPGFAGPDCR). An EGF-like 16; calcium-binding domain is found at 817 to 853 (NINECQSSPCAFGSTCVDEINGYRCLCPPGRIGPDCQ). Residues 860–914 (CIANGQVTADGAKWEEDCNICQCQNGRIHCTMMWCGPKSCRIGKARGGCPASQSC) form the VWFC domain. The 39-residue stretch at 918-956 (KEEQCFVKPCPSLGECWPSAPPPPSKCHASFSYQDDSCA) folds into the EGF-like 17 domain. N-linked (GlcNAc...) asparagine glycosylation is found at Asn-957, Asn-988, and Asn-1042. The chain crosses the membrane as a helical span at residues 1065–1087 (LVPLLSSIFIVLWIFALASAFLW). The Cytoplasmic segment spans residues 1088–1213 (CIHRRRKQNT…QSLNRMEYIV (126 aa)). Positions 1181 to 1202 (EERAPNKNPNWTNKQDNRDLET) are disordered.

It is found in the membrane. The protein resides in the cell membrane. In terms of biological role, ligand for Notch receptors and involved in the mediation of Notch signaling. Seems to be involved in cell-fate decisions. The sequence is that of Protein jagged-1b (jag1b) from Danio rerio (Zebrafish).